Reading from the N-terminus, the 477-residue chain is Iroquois homeobox protein 6a (477 aa).

Residues 148–210 (GSTRRKNATR…NARRRLKKEN (63 aa)) constitute a DNA-binding region (homeobox). Disordered regions lie at residues 209–282 (ENKM…PDIP) and 303–323 (DYLD…QSTS). Residues 219-237 (KAGDDRKEDLDSKDSKDEQ) are compositionally biased toward basic and acidic residues. Residues 243–253 (DLDDMEDEDCD) show a composition bias toward acidic residues. Basic and acidic residues predominate over residues 254–264 (KLDSDCEKSGQ). A compositionally biased stretch (low complexity) spans 310–321 (SKPQQQQPSPQS).

The protein belongs to the TALE/IRO homeobox family.

It is found in the nucleus. Functionally, transcription factor. Binds to the iroquois binding site (IBS) motif of target genes to regulate gene expression; functions as a transcriptional activator or repressor. In concert with irx5a, plays a role in visual performance. This is Iroquois homeobox protein 6a from Danio rerio (Zebrafish).